Consider the following 509-residue polypeptide: Maturase K (509 aa).

This sequence belongs to the intron maturase 2 family. MatK subfamily.

It is found in the plastid. Its subcellular location is the chloroplast. Functionally, usually encoded in the trnK tRNA gene intron. Probably assists in splicing its own and other chloroplast group II introns. The protein is Maturase K of Portulaca oleracea (Common purslane).